We begin with the raw amino-acid sequence, 416 residues long: uncharacterized protein (416 aa).

Positions Leu-3–Arg-150 constitute an N-acetyltransferase domain. Residues Val-83–Val-85 and Arg-91–Ser-96 each bind acetyl-CoA. Catalysis depends on Tyr-124, which acts as the Proton donor. Residue Phe-416 is the Proton acceptor; via carboxylate of the active site.

The protein belongs to the acetyltransferase Eis family. In terms of assembly, homohexamer; trimer of dimers.

This is an uncharacterized protein from Streptomyces griseus subsp. griseus (strain JCM 4626 / CBS 651.72 / NBRC 13350 / KCC S-0626 / ISP 5235).